Consider the following 259-residue polypeptide: Adenosylcobinamide-GDP ribazoletransferase (259 aa).

A run of 7 helical transmembrane segments spans residues 41 to 61, 67 to 87, 119 to 139, 148 to 168, 179 to 199, 200 to 220, and 237 to 257; these read AAIW…AIVF, FGLA…IATG, IGAY…NVLS, LFAL…FMHL, AGAG…GAIP, LLLL…LLFA, and TIGA…SVAL.

The protein belongs to the CobS family. It depends on Mg(2+) as a cofactor.

It localises to the cell inner membrane. The catalysed reaction is alpha-ribazole + adenosylcob(III)inamide-GDP = adenosylcob(III)alamin + GMP + H(+). It catalyses the reaction alpha-ribazole 5'-phosphate + adenosylcob(III)inamide-GDP = adenosylcob(III)alamin 5'-phosphate + GMP + H(+). It functions in the pathway cofactor biosynthesis; adenosylcobalamin biosynthesis; adenosylcobalamin from cob(II)yrinate a,c-diamide: step 7/7. Joins adenosylcobinamide-GDP and alpha-ribazole to generate adenosylcobalamin (Ado-cobalamin). Also synthesizes adenosylcobalamin 5'-phosphate from adenosylcobinamide-GDP and alpha-ribazole 5'-phosphate. This is Adenosylcobinamide-GDP ribazoletransferase from Mesorhizobium japonicum (strain LMG 29417 / CECT 9101 / MAFF 303099) (Mesorhizobium loti (strain MAFF 303099)).